The primary structure comprises 40 residues: Protamine-1 (40 aa).

Residues 1-40 (MPPRRKRVSSAPRRRRRTYRRTTAHKHQDRPVHRRRRRRH) form a disordered region.

As to expression, testis.

The protein resides in the nucleus. Its subcellular location is the chromosome. Functionally, protamines substitute for histones in the chromatin of sperm during the haploid phase of spermatogenesis. They compact sperm DNA into a highly condensed, stable and inactive complex. This chain is Protamine-1 (PBP1), found in Bufo japonicus (Japanese common toad).